Consider the following 84-residue polypeptide: Anthracycline acyl carrier protein DpsG (84 aa).

Residues glutamate 3–leucine 80 form the Carrier domain. Position 40 is an O-(pantetheine 4'-phosphoryl)serine (serine 40).

It participates in antibiotic biosynthesis; daunorubicin biosynthesis. It functions in the pathway antibiotic biosynthesis; carminomycin biosynthesis. Its pathway is antibiotic biosynthesis; rhodomycin biosynthesis. The protein operates within antibiotic biosynthesis; aclacinomycin biosynthesis. Involved in the biosynthesis of aklanonate which is an important precursor common to the formation of the clinically significant anthracyclines such as carminomycin, daunorubicin (daunomycin), rhodomycin, aclacinomycin T (aklavin) and aclacinomycin A (aclarubicin). These compounds are aromatic polyketide antibiotics that exhibit high cytotoxicity and are widely applied in the chemotherapy of a variety of cancers. The protein is Anthracycline acyl carrier protein DpsG (dpsG) of Streptomyces peucetius.